A 236-amino-acid chain; its full sequence is Pyridoxine 5'-phosphate synthase (236 aa).

Asn-6 is a 3-amino-2-oxopropyl phosphate binding site. 8–9 contacts 1-deoxy-D-xylulose 5-phosphate; the sequence is DH. Arg-17 provides a ligand contact to 3-amino-2-oxopropyl phosphate. His-42 (proton acceptor) is an active-site residue. Residues Arg-44 and His-49 each contribute to the 1-deoxy-D-xylulose 5-phosphate site. Glu-69 functions as the Proton acceptor in the catalytic mechanism. Residue Thr-99 coordinates 1-deoxy-D-xylulose 5-phosphate. His-190 acts as the Proton donor in catalysis. Residues Gly-191 and 212–213 contribute to the 3-amino-2-oxopropyl phosphate site; that span reads GH.

Belongs to the PNP synthase family. In terms of assembly, homooctamer; tetramer of dimers.

Its subcellular location is the cytoplasm. The enzyme catalyses 3-amino-2-oxopropyl phosphate + 1-deoxy-D-xylulose 5-phosphate = pyridoxine 5'-phosphate + phosphate + 2 H2O + H(+). It functions in the pathway cofactor biosynthesis; pyridoxine 5'-phosphate biosynthesis; pyridoxine 5'-phosphate from D-erythrose 4-phosphate: step 5/5. Its function is as follows. Catalyzes the complicated ring closure reaction between the two acyclic compounds 1-deoxy-D-xylulose-5-phosphate (DXP) and 3-amino-2-oxopropyl phosphate (1-amino-acetone-3-phosphate or AAP) to form pyridoxine 5'-phosphate (PNP) and inorganic phosphate. This chain is Pyridoxine 5'-phosphate synthase, found in Chloroherpeton thalassium (strain ATCC 35110 / GB-78).